We begin with the raw amino-acid sequence, 144 residues long: Putative sugar phosphate isomerase RC0402 (144 aa).

His12 contributes to the substrate binding site. His101 serves as the catalytic Proton donor. Arg135 is a substrate binding site.

The protein belongs to the LacAB/RpiB family.

The sequence is that of Putative sugar phosphate isomerase RC0402 from Rickettsia conorii (strain ATCC VR-613 / Malish 7).